Here is a 235-residue protein sequence, read N- to C-terminus: Tetraspanin-8 (235 aa).

Residues methionine 1–methionine 12 are Cytoplasmic-facing. The chain crosses the membrane as a helical span at residues phenylalanine 13–valine 33. Residues arginine 34–proline 52 lie on the Extracellular side of the membrane. A helical transmembrane segment spans residues phenylalanine 53–glycine 73. Residues cysteine 74–methionine 84 are Cytoplasmic-facing. Residues leucine 85 to leucine 105 form a helical membrane-spanning segment. Over glycine 106–asparagine 203 the chain is Extracellular. The N-linked (GlcNAc...) asparagine glycan is linked to asparagine 118. A helical membrane pass occupies residues isoleucine 204–phenylalanine 224. Residues serine 225 to lysine 235 are Cytoplasmic-facing.

The protein belongs to the tetraspanin (TM4SF) family. As to quaternary structure, forms homooligomers. Interacts with MEP1B. Interacts with integrin alpha3/ITGA3. Interacts with RICTOR and MTOR. Interacts with ADAM17. Interacts with ECE1.

Its subcellular location is the cell membrane. Its function is as follows. Structural component of specialized membrane microdomains known as tetraspanin-enriched microdomains (TERMs), which act as platforms for receptor clustering and signaling. Participates thereby in diverse biological functions such as cell signal transduction, migration and protein trafficking. Promotes ADAM17-mediated TNF-alpha processing through recruitment of ADAM17 to tetraspanin-enriched micro-domains (TEMs). Forms a complex with RICTOR and integrin alpha3/ITGA3 to mediate mTORC2 activation and AKT1 phosphorylation leading to cell migration. Reduces apoptosis and autophagy induced by high glucose levels through forming a complex with mTOR and RICTOR. Contributes to the maintenance of intestinal epithelial barrier and plays a role in the regulation of intestine inflammation by switching interferon gamma receptor 1/IFNGR1 from clathrin-dependent to lipid raft-dependent endocytosis route to limit STAT1 activation magnitude and duration. Acts as a modulator of the endothelin axis by associating with endothelin converting enzyme ECE1 and regulating its activity of conversion of the endothelin-1 precursor to endothelin. The sequence is that of Tetraspanin-8 (Tspan8) from Mus musculus (Mouse).